Reading from the N-terminus, the 226-residue chain is Uracil-DNA glycosylase (226 aa).

Asp-65 (proton acceptor) is an active-site residue.

Belongs to the uracil-DNA glycosylase (UDG) superfamily. UNG family.

The protein resides in the cytoplasm. The catalysed reaction is Hydrolyzes single-stranded DNA or mismatched double-stranded DNA and polynucleotides, releasing free uracil.. Functionally, excises uracil residues from the DNA which can arise as a result of misincorporation of dUMP residues by DNA polymerase or due to deamination of cytosine. The chain is Uracil-DNA glycosylase from Enterococcus faecalis (strain ATCC 700802 / V583).